Consider the following 706-residue polypeptide: Elongation factor G (706 aa).

Residues 12 to 288 form the tr-type G domain; that stretch reads EKTRNIGIMA…GVTNYLPSPN (277 aa). GTP is bound by residues 21-28, 85-89, and 139-142; these read AHIDAGKT, DTPGH, and NKMD. The disordered stretch occupies residues 288–309; the sequence is NDVPAITGHHPQDKEEDITRHP. A compositionally biased stretch (basic and acidic residues) spans 297-309; that stretch reads HPQDKEEDITRHP.

It belongs to the TRAFAC class translation factor GTPase superfamily. Classic translation factor GTPase family. EF-G/EF-2 subfamily.

Its subcellular location is the cytoplasm. In terms of biological role, catalyzes the GTP-dependent ribosomal translocation step during translation elongation. During this step, the ribosome changes from the pre-translocational (PRE) to the post-translocational (POST) state as the newly formed A-site-bound peptidyl-tRNA and P-site-bound deacylated tRNA move to the P and E sites, respectively. Catalyzes the coordinated movement of the two tRNA molecules, the mRNA and conformational changes in the ribosome. The polypeptide is Elongation factor G (Salinibacter ruber (strain DSM 13855 / M31)).